Reading from the N-terminus, the 231-residue chain is 7-cyano-7-deazaguanine synthase (231 aa).

8–18 is an ATP binding site; that stretch reads FSGGQDSTTCL. The Zn(2+) site is built by Cys-188, Cys-197, Cys-200, and Cys-203.

It belongs to the QueC family. Requires Zn(2+) as cofactor.

It catalyses the reaction 7-carboxy-7-deazaguanine + NH4(+) + ATP = 7-cyano-7-deazaguanine + ADP + phosphate + H2O + H(+). Its pathway is purine metabolism; 7-cyano-7-deazaguanine biosynthesis. In terms of biological role, catalyzes the ATP-dependent conversion of 7-carboxy-7-deazaguanine (CDG) to 7-cyano-7-deazaguanine (preQ(0)). The protein is 7-cyano-7-deazaguanine synthase of Citrobacter koseri (strain ATCC BAA-895 / CDC 4225-83 / SGSC4696).